Consider the following 184-residue polypeptide: Peptide deformylase 2 (184 aa).

2 residues coordinate Fe cation: Cys-110 and His-153. Glu-154 is an active-site residue. Residue His-157 participates in Fe cation binding.

Belongs to the polypeptide deformylase family. The cofactor is Fe(2+).

The enzyme catalyses N-terminal N-formyl-L-methionyl-[peptide] + H2O = N-terminal L-methionyl-[peptide] + formate. In terms of biological role, removes the formyl group from the N-terminal Met of newly synthesized proteins. Requires at least a dipeptide for an efficient rate of reaction. N-terminal L-methionine is a prerequisite for activity but the enzyme has broad specificity at other positions. In Geobacillus stearothermophilus (Bacillus stearothermophilus), this protein is Peptide deformylase 2.